The following is a 226-amino-acid chain: 2-C-methyl-D-erythritol 4-phosphate cytidylyltransferase (226 aa).

Belongs to the IspD/TarI cytidylyltransferase family. IspD subfamily.

The enzyme catalyses 2-C-methyl-D-erythritol 4-phosphate + CTP + H(+) = 4-CDP-2-C-methyl-D-erythritol + diphosphate. Its pathway is isoprenoid biosynthesis; isopentenyl diphosphate biosynthesis via DXP pathway; isopentenyl diphosphate from 1-deoxy-D-xylulose 5-phosphate: step 2/6. Catalyzes the formation of 4-diphosphocytidyl-2-C-methyl-D-erythritol from CTP and 2-C-methyl-D-erythritol 4-phosphate (MEP). This is 2-C-methyl-D-erythritol 4-phosphate cytidylyltransferase from Haemophilus ducreyi (strain 35000HP / ATCC 700724).